We begin with the raw amino-acid sequence, 312 residues long: DNA-directed RNA polymerase subunit alpha (312 aa).

An alpha N-terminal domain (alpha-NTD) region spans residues 1–226 (MIEFEKPIIT…EHLNLFTDLT (226 aa)). Positions 243–312 (DEKVLDRTIE…DLGLGLKNDK (70 aa)) are alpha C-terminal domain (alpha-CTD).

It belongs to the RNA polymerase alpha chain family. As to quaternary structure, homodimer. The RNAP catalytic core consists of 2 alpha, 1 beta, 1 beta' and 1 omega subunit. When a sigma factor is associated with the core the holoenzyme is formed, which can initiate transcription.

The catalysed reaction is RNA(n) + a ribonucleoside 5'-triphosphate = RNA(n+1) + diphosphate. Its function is as follows. DNA-dependent RNA polymerase catalyzes the transcription of DNA into RNA using the four ribonucleoside triphosphates as substrates. The chain is DNA-directed RNA polymerase subunit alpha from Streptococcus pyogenes serotype M1.